An 89-amino-acid polypeptide reads, in one-letter code: Small ribosomal subunit protein uS15 (89 aa).

Belongs to the universal ribosomal protein uS15 family. As to quaternary structure, part of the 30S ribosomal subunit. Forms a bridge to the 50S subunit in the 70S ribosome, contacting the 23S rRNA.

Its function is as follows. One of the primary rRNA binding proteins, it binds directly to 16S rRNA where it helps nucleate assembly of the platform of the 30S subunit by binding and bridging several RNA helices of the 16S rRNA. Forms an intersubunit bridge (bridge B4) with the 23S rRNA of the 50S subunit in the ribosome. In Pseudarthrobacter chlorophenolicus (strain ATCC 700700 / DSM 12829 / CIP 107037 / JCM 12360 / KCTC 9906 / NCIMB 13794 / A6) (Arthrobacter chlorophenolicus), this protein is Small ribosomal subunit protein uS15.